We begin with the raw amino-acid sequence, 365 residues long: tRNA(Met) cytidine acetate ligase (365 aa).

ATP is bound by residues 7–20, Gly-96, Asn-152, and Arg-175; that span reads IAEFNPFHNGHKYL.

The protein belongs to the TmcAL family.

Its subcellular location is the cytoplasm. It catalyses the reaction cytidine(34) in elongator tRNA(Met) + acetate + ATP = N(4)-acetylcytidine(34) in elongator tRNA(Met) + AMP + diphosphate. Functionally, catalyzes the formation of N(4)-acetylcytidine (ac(4)C) at the wobble position of elongator tRNA(Met), using acetate and ATP as substrates. First activates an acetate ion to form acetyladenylate (Ac-AMP) and then transfers the acetyl group to tRNA to form ac(4)C34. The protein is tRNA(Met) cytidine acetate ligase of Streptococcus pneumoniae (strain JJA).